A 151-amino-acid polypeptide reads, in one-letter code: uncharacterized protein (151 aa).

The first 24 residues, 1 to 24 (MYYSIIIACLVLLLCLVIYVGHRA), serve as a signal peptide directing secretion.

The protein belongs to the asfivirus EP152R family.

Its subcellular location is the virion. This is an uncharacterized protein from Ornithodoros (relapsing fever ticks).